A 438-amino-acid chain; its full sequence is sn-glycerol-3-phosphate-binding periplasmic protein UgpB (438 aa).

The N-terminal stretch at 1–23 is a signal peptide; the sequence is MKPLHYTASALALGLALMGNAQA. Sn-glycerol 3-phosphate is bound by residues Tyr-65, Glu-89, Ser-144, Ser-270, Gly-307, Tyr-346, and Arg-397.

The protein belongs to the bacterial solute-binding protein 1 family. The complex is composed of two ATP-binding proteins (UgpC), two transmembrane proteins (UgpA and UgpE) and a solute-binding protein (UgpB).

The protein localises to the periplasm. In terms of biological role, part of the ABC transporter complex UgpBAEC involved in sn-glycerol-3-phosphate (G3P) import. Binds G3P. The polypeptide is sn-glycerol-3-phosphate-binding periplasmic protein UgpB (ugpB) (Escherichia coli O157:H7).